The sequence spans 258 residues: Tryptophan synthase alpha chain (258 aa).

Active-site proton acceptor residues include E52 and D63.

It belongs to the TrpA family. As to quaternary structure, tetramer of two alpha and two beta chains.

It catalyses the reaction (1S,2R)-1-C-(indol-3-yl)glycerol 3-phosphate + L-serine = D-glyceraldehyde 3-phosphate + L-tryptophan + H2O. Its pathway is amino-acid biosynthesis; L-tryptophan biosynthesis; L-tryptophan from chorismate: step 5/5. Its function is as follows. The alpha subunit is responsible for the aldol cleavage of indoleglycerol phosphate to indole and glyceraldehyde 3-phosphate. In Streptococcus pneumoniae (strain 70585), this protein is Tryptophan synthase alpha chain.